Here is a 987-residue protein sequence, read N- to C-terminus: ATP-dependent 6-phosphofructokinase subunit alpha (987 aa).

The interval 1 to 602 is N-terminal catalytic PFK domain 1; that stretch reads MPSSSDAINR…DYRYFRDISI (602 aa). Residues Gly-237, 300 to 301, and 330 to 333 contribute to the ATP site; these read RC and GDGS. Position 331 (Asp-331) interacts with Mg(2+). Beta-D-fructose 6-phosphate is bound by residues 376–378, Arg-413, 420–422, Glu-477, Arg-504, and 510–513; these read SID, MGR, and HVQR. The Proton acceptor role is filled by Asp-378. An interdomain linker region spans residues 603 to 616; the sequence is YDDGSKQLSEDKRL. The C-terminal regulatory PFK domain 2 stretch occupies residues 617 to 987; it reads NIAIVHVGAA…KSLLKKQERY (371 aa). Beta-D-fructose 2,6-bisphosphate is bound by residues Arg-686, 743–747, Arg-781, 788–790, Glu-848, Arg-874, 880–883, and Arg-958; these read TVSNN, QGG, and HVQQ.

The protein belongs to the phosphofructokinase type A (PFKA) family. ATP-dependent PFK group I subfamily. Eukaryotic two domain clade 'E' sub-subfamily. As to quaternary structure, heterooctamer of 4 alpha and 4 beta chains. The cofactor is Mg(2+).

It is found in the cytoplasm. It carries out the reaction beta-D-fructose 6-phosphate + ATP = beta-D-fructose 1,6-bisphosphate + ADP + H(+). The protein operates within carbohydrate degradation; glycolysis; D-glyceraldehyde 3-phosphate and glycerone phosphate from D-glucose: step 3/4. With respect to regulation, allosterically activated by ADP, AMP, or fructose 2,6-bisphosphate, and allosterically inhibited by ATP or citrate. Its function is as follows. Catalyzes the phosphorylation of D-fructose 6-phosphate to fructose 1,6-bisphosphate by ATP, the first committing step of glycolysis. The sequence is that of ATP-dependent 6-phosphofructokinase subunit alpha (PFK1) from Candida albicans (Yeast).